A 100-amino-acid chain; its full sequence is Putative pterin-4-alpha-carbinolamine dehydratase 2 (100 aa).

It belongs to the pterin-4-alpha-carbinolamine dehydratase family.

It carries out the reaction (4aS,6R)-4a-hydroxy-L-erythro-5,6,7,8-tetrahydrobiopterin = (6R)-L-erythro-6,7-dihydrobiopterin + H2O. The sequence is that of Putative pterin-4-alpha-carbinolamine dehydratase 2 from Cupriavidus pinatubonensis (strain JMP 134 / LMG 1197) (Cupriavidus necator (strain JMP 134)).